The chain runs to 361 residues: tRNA-specific 2-thiouridylase MnmA (361 aa).

Residues 11–18 and Met37 each bind ATP; that span reads GMSGGVDS. The interaction with target base in tRNA stretch occupies residues 97–99; sequence NPD. Cys102 acts as the Nucleophile in catalysis. An intrachain disulfide couples Cys102 to Cys199. Position 126 (Gly126) interacts with ATP. The tract at residues 149–151 is interaction with tRNA; that stretch reads KDQ. The Cysteine persulfide intermediate role is filled by Cys199. The interval 311-312 is interaction with tRNA; the sequence is RY.

This sequence belongs to the MnmA/TRMU family.

The protein resides in the cytoplasm. It carries out the reaction S-sulfanyl-L-cysteinyl-[protein] + uridine(34) in tRNA + AH2 + ATP = 2-thiouridine(34) in tRNA + L-cysteinyl-[protein] + A + AMP + diphosphate + H(+). Catalyzes the 2-thiolation of uridine at the wobble position (U34) of tRNA, leading to the formation of s(2)U34. The sequence is that of tRNA-specific 2-thiouridylase MnmA from Cupriavidus taiwanensis (strain DSM 17343 / BCRC 17206 / CCUG 44338 / CIP 107171 / LMG 19424 / R1) (Ralstonia taiwanensis (strain LMG 19424)).